Consider the following 71-residue polypeptide: Small ribosomal subunit protein eS17 (71 aa).

Belongs to the eukaryotic ribosomal protein eS17 family.

The polypeptide is Small ribosomal subunit protein eS17 (Pyrobaculum aerophilum (strain ATCC 51768 / DSM 7523 / JCM 9630 / CIP 104966 / NBRC 100827 / IM2)).